The following is a 156-amino-acid chain: ADP-ribosylation factor-like protein 2-binding protein (156 aa).

It belongs to the ARL2BP family.

Its subcellular location is the cytoplasm. The protein resides in the mitochondrion intermembrane space. The protein localises to the cytoskeleton. It is found in the microtubule organizing center. It localises to the centrosome. Its subcellular location is the nucleus. The protein resides in the spindle. The protein localises to the cilium basal body. In terms of biological role, plays a role as an effector of the ADP-ribosylation factor-like protein 2, ARL2. This is ADP-ribosylation factor-like protein 2-binding protein (ARL2BP) from Gallus gallus (Chicken).